The sequence spans 412 residues: Shaggy-related protein kinase zeta (412 aa).

Residues 1 to 19 (MTSIPLGPPQPPSLAPQPP) are compositionally biased toward pro residues. Residues 1 to 33 (MTSIPLGPPQPPSLAPQPPHLHGGDSLKRRPDI) are disordered. Positions 22-33 (HGGDSLKRRPDI) are enriched in basic and acidic residues. S26 carries the phosphoserine modification. The Protein kinase domain occupies 72-356 (YMAERVVGTG…ALEACAHPFF (285 aa)). Residues 78 to 86 (VGTGSFGIV) and K101 contribute to the ATP site. S127 is modified (phosphoserine). Residues T136 and T137 each carry the phosphothreonine modification. The active-site Proton acceptor is the D197. Position 219 is a phosphoserine (S219). Y232 bears the Phosphotyrosine mark. S252 is modified (phosphoserine). The residue at position 293 (T293) is a Phosphothreonine. The residue at position 342 (S342) is a Phosphoserine. Phosphothreonine is present on T346.

It belongs to the protein kinase superfamily. CMGC Ser/Thr protein kinase family. GSK-3 subfamily. As to quaternary structure, binds to KIB1. Interacts with beet curly top virus AL4/C4 and tomato golden mosaic virus AL4/AC4. Post-translationally, autophosphorylated mainly on threonine and serine residues.

The enzyme catalyses L-seryl-[protein] + ATP = O-phospho-L-seryl-[protein] + ADP + H(+). It carries out the reaction L-threonyl-[protein] + ATP = O-phospho-L-threonyl-[protein] + ADP + H(+). Its function is as follows. May mediate extracellular signals to regulate transcription in differentiating cells. The chain is Shaggy-related protein kinase zeta (ASK6) from Arabidopsis thaliana (Mouse-ear cress).